The primary structure comprises 87 residues: MKTLLLTLVVVTIVCLDLGYTRTCLISPSSTPQTCPNGQDICFLKAQCDKFCSIRGPVIEQGCVATCPQFRSNYRSLLCCTTDNCNH.

A signal peptide spans 1–21; it reads MKTLLLTLVVVTIVCLDLGYT. Disulfide bonds link C24–C42, C35–C63, C48–C52, C67–C79, and C80–C85.

It belongs to the three-finger toxin family. Long-chain subfamily. Kappa-neurotoxin sub-subfamily. Homodimer and heterodimer; non-covalently linked. Expressed by the venom gland.

The protein localises to the secreted. Postsynaptic neurotoxin that binds and inhibits neuronal nicotinic acetylcholine receptors (nAChR) with high affinity (IC(50)&lt;100 nM). Is a selective, and slowly reversible antagonist of alpha-3/CHRNA3-containing and some alpha-4/CHRNA4-containing AChRs. The protein is Kappa-bungarotoxin of Bungarus multicinctus (Many-banded krait).